Here is a 943-residue protein sequence, read N- to C-terminus: Tyrosine-protein kinase transmembrane receptor ROR2 (943 aa).

A signal peptide spans 1 to 33 (MARGSALPRRPLLCIPAVWAAAALLLSVSRTSG). Over 34–403 (EVEVLDPNDP…CSPRDSSKMG (370 aa)) the chain is Extracellular. Positions 55–145 (PTLKGYFLNF…VATNGMKTIT (91 aa)) constitute an Ig-like C2-type domain. Residue N70 is glycosylated (N-linked (GlcNAc...) asparagine). Cystine bridges form between C83–C135, C174–C239, C182–C232, C223–C264, C252–C300, C256–C286, C316–C394, C337–C377, and C365–C389. In terms of domain architecture, FZ spans 169 to 303 (HEDGFCQPYR…SPDAANCMRI (135 aa)). N188 carries an N-linked (GlcNAc...) asparagine glycan. The region spanning 316 to 394 (CYNGSGMDYR…RMELCDVPSC (79 aa)) is the Kringle domain. N318 is a glycosylation site (N-linked (GlcNAc...) asparagine). Residues 404 to 424 (ILYILVPSIAIPLVIACLFFL) form a helical membrane-spanning segment. Over 425–943 (VCMCRNKQKA…VDEAQVQLEA (519 aa)) the chain is Cytoplasmic. S469 and S471 each carry sulfoserine; partial. In terms of domain architecture, Protein kinase spans 473-746 (VRFMEELGED…PRFKDIHSRL (274 aa)). Residues 479 to 487 (LGEDRFGKV) and K507 contribute to the ATP site. Residue D615 is the Proton acceptor of the active site. Residue Y646 is modified to Phosphotyrosine; by autocatalysis. Disordered stretches follow at residues 757–796 (SSAQTSGASNTTQTSSLSTSPVSNVSNARYVGPKQKAPPF) and 850–931 (QVPP…DCDT). 2 stretches are compositionally biased toward low complexity: residues 765-791 (SNTTQTSSLSTSPVSNVSNARYVGPKQ) and 857-872 (PKPSSHHSGSGSTSTG). Asymmetric dimethylarginine is present on R785. The span at 873 to 883 (YVTTAPSNTSM) shows a compositional bias: polar residues.

It belongs to the protein kinase superfamily. Tyr protein kinase family. ROR subfamily. As to quaternary structure, homodimer; promotes osteogenesis. Binds YWHAB. Interacts with WTIP. Interacts with ROR2. Requires Mg(2+) as cofactor.

It is found in the cell membrane. The catalysed reaction is L-tyrosyl-[protein] + ATP = O-phospho-L-tyrosyl-[protein] + ADP + H(+). Tyrosine-protein kinase receptor which may be involved in the early formation of the chondrocytes. It seems to be required for cartilage and growth plate development. Phosphorylates YWHAB, leading to induction of osteogenesis and bone formation. In contrast, has also been shown to have very little tyrosine kinase activity in vitro. May act as a receptor for wnt ligand WNT5A which may result in the inhibition of WNT3A-mediated signaling. This chain is Tyrosine-protein kinase transmembrane receptor ROR2 (ROR2), found in Homo sapiens (Human).